The primary structure comprises 25 residues: Germin-like protein (25 aa).

Belongs to the germin family.

The chain is Germin-like protein from Populus euphratica (Euphrates poplar).